The following is a 453-amino-acid chain: Vitamin D3 receptor A (453 aa).

The nuclear receptor DNA-binding region spans 53–128 (PRICGVCGDK…IGMMKEFILT (76 aa)). Positions 56, 59, 73, 76, 92, 98, 108, and 111 each coordinate Zn(2+). 2 consecutive NR C4-type zinc fingers follow at residues 56–76 (CGVC…CEGC) and 92–111 (CPFN…CQAC). A hinge region spans residues 129 to 158 (DEEVQRKKDLIMKRKEEEAAREARKPRLSD). One can recognise an NR LBD domain in the interval 159–449 (EQMQIINSLV…LTPLVLEVFG (291 aa)). Positions 175 and 265 each coordinate calcitriol. Residues 274–292 (KMIPGFRDLTAEDQIALLK) are interaction with coactivator LXXLL motif. Arg302, Ser306, His333, and His423 together coordinate calcitriol. Residues 442 to 450 (PLVLEVFGS) carry the 9aaTAD motif.

It belongs to the nuclear hormone receptor family. NR1 subfamily. Homodimer in the absence of bound vitamin D3. Heterodimer with RXRA after vitamin D3 binding. Interacts with ncoa1 and possibly other coactivators, leading to a strong increase of transcription of target genes. In terms of tissue distribution, detected in embryo 24 to 48 hours after fertilization and in gastrula.

It is found in the nucleus. It localises to the cytoplasm. Its function is as follows. Nuclear receptor for calcitriol, the active form of vitamin D3 which mediates the action of this vitamin on cells. Enters the nucleus upon vitamin D3 binding where it forms heterodimers with the retinoid X receptor/RXR. The VDR-RXR heterodimers bind to specific response elements on DNA and activate the transcription of vitamin D3-responsive target genes. Recruited to promoters via its interaction with BAZ1B/WSTF which mediates the interaction with acetylated histones, an essential step for VDR-promoter association. Plays a central role in calcium homeostasis. This chain is Vitamin D3 receptor A (vdra), found in Danio rerio (Zebrafish).